Consider the following 273-residue polypeptide: Type II methyltransferase M2.MboI (273 aa).

It belongs to the N(4)/N(6)-methyltransferase family.

It carries out the reaction a 2'-deoxyadenosine in DNA + S-adenosyl-L-methionine = an N(6)-methyl-2'-deoxyadenosine in DNA + S-adenosyl-L-homocysteine + H(+). In terms of biological role, a beta subtype methylase that recognizes the double-stranded sequence 5'-GATC-3', methylates A-2 on both strands, and protects the DNA from cleavage by the MboI endonuclease. This seems to be a weaker methylase than M1.MboI. The polypeptide is Type II methyltransferase M2.MboI (mboIBM) (Moraxella bovis).